The primary structure comprises 372 residues: Mitogen-activated protein kinase homolog NTF3 (372 aa).

Positions 32-319 (YVPIKPIGRG…VIEALQHPYM (288 aa)) constitute a Protein kinase domain. ATP is bound by residues 38-46 (IGRGAYGIV) and K61. The active-site Proton acceptor is the D158. T191 carries the post-translational modification Phosphothreonine. Positions 191–193 (TEY) match the TXY motif. A Phosphotyrosine modification is found at Y193.

The protein belongs to the protein kinase superfamily. CMGC Ser/Thr protein kinase family. MAP kinase subfamily. The cofactor is Mg(2+). In terms of processing, dually phosphorylated on Thr-191 and Tyr-193, which activates the enzyme. Very low autophosphorylation, although dramatically increased when Mn(2+) is added to the reaction instead of Mg(2+). Ubiquitous.

It carries out the reaction L-seryl-[protein] + ATP = O-phospho-L-seryl-[protein] + ADP + H(+). The catalysed reaction is L-threonyl-[protein] + ATP = O-phospho-L-threonyl-[protein] + ADP + H(+). With respect to regulation, activated by tyrosine and threonine phosphorylation. This chain is Mitogen-activated protein kinase homolog NTF3 (NTF3), found in Nicotiana tabacum (Common tobacco).